Reading from the N-terminus, the 119-residue chain is Protein TraH (119 aa).

The disordered stretch occupies residues M1–A67. A compositionally biased stretch (low complexity) spans A41 to P54.

The initiation process of transfer DNA synthesis requires the interaction of at least three plasmid-specific components (TraH, TraI, and TraJ) at the transfer origin resulting in the assembly of a specialized nucleoprotein complex - the relaxosome. This Escherichia coli protein is Protein TraH (traH).